Consider the following 384-residue polypeptide: Endoglucanase (384 aa).

Positions 1–25 are cleaved as a signal peptide; sequence MTRRRLLHAGTLAGVAALLPAAALA. E63 serves as the catalytic Proton donor. D124 acts as the Nucleophile in catalysis.

This sequence belongs to the glycosyl hydrolase 8 (cellulase D) family.

Its subcellular location is the secreted. It catalyses the reaction Endohydrolysis of (1-&gt;4)-beta-D-glucosidic linkages in cellulose, lichenin and cereal beta-D-glucans.. Its pathway is glycan metabolism; bacterial cellulose biosynthesis. In terms of biological role, hydrolyzes carboxymethylcellulose. In Xanthomonas axonopodis pv. citri (strain 306), this protein is Endoglucanase (bcsZ).